We begin with the raw amino-acid sequence, 49 residues long: MRVNITLACTECGERNYITSKNKRNNPERLELKKYCPRDRKVTLHRETK.

It belongs to the bacterial ribosomal protein bL33 family.

This Geobacillus kaustophilus (strain HTA426) protein is Large ribosomal subunit protein bL33B.